Consider the following 251-residue polypeptide: Cell division protein ZapD (251 aa).

This sequence belongs to the ZapD family. In terms of assembly, interacts with FtsZ.

The protein localises to the cytoplasm. Functionally, cell division factor that enhances FtsZ-ring assembly. Directly interacts with FtsZ and promotes bundling of FtsZ protofilaments, with a reduction in FtsZ GTPase activity. The protein is Cell division protein ZapD of Burkholderia orbicola (strain MC0-3).